Reading from the N-terminus, the 107-residue chain is MKKIVFLMLALSGFAFAAEGSMNQWLASFSILAAGLGLGVAALGGAIGMGNTAAATIAGTARNPGLGGKLMTTMFIALAMIEAQVIYALVIALIALYANPFQALVAA.

Helical transmembrane passes span 4 to 24 (IVFL…SMNQ), 29 to 49 (FSIL…AIGM), and 74 to 94 (MFIA…IALI).

This sequence belongs to the ATPase C chain family. In terms of assembly, F-type ATPases have 2 components, F(1) - the catalytic core - and F(0) - the membrane proton channel. F(1) has five subunits: alpha(3), beta(3), gamma(1), delta(1), epsilon(1). F(0) has three main subunits: a(1), b(2) and c(10-14). The alpha and beta chains form an alternating ring which encloses part of the gamma chain. F(1) is attached to F(0) by a central stalk formed by the gamma and epsilon chains, while a peripheral stalk is formed by the delta and b chains.

It is found in the cell inner membrane. In terms of biological role, f(1)F(0) ATP synthase produces ATP from ADP in the presence of a proton or sodium gradient. F-type ATPases consist of two structural domains, F(1) containing the extramembraneous catalytic core and F(0) containing the membrane proton channel, linked together by a central stalk and a peripheral stalk. During catalysis, ATP synthesis in the catalytic domain of F(1) is coupled via a rotary mechanism of the central stalk subunits to proton translocation. Functionally, key component of the F(0) channel; it plays a direct role in translocation across the membrane. A homomeric c-ring of between 10-14 subunits forms the central stalk rotor element with the F(1) delta and epsilon subunits. The polypeptide is ATP synthase subunit c (Campylobacter lari (strain RM2100 / D67 / ATCC BAA-1060)).